Here is a 461-residue protein sequence, read N- to C-terminus: Asparagine--tRNA ligase (461 aa).

This sequence belongs to the class-II aminoacyl-tRNA synthetase family. Homodimer.

Its subcellular location is the cytoplasm. The catalysed reaction is tRNA(Asn) + L-asparagine + ATP = L-asparaginyl-tRNA(Asn) + AMP + diphosphate + H(+). The protein is Asparagine--tRNA ligase of Solibacter usitatus (strain Ellin6076).